The primary structure comprises 105 residues: Small ribosomal subunit protein bS20 (105 aa).

This sequence belongs to the bacterial ribosomal protein bS20 family.

Its function is as follows. Binds directly to 16S ribosomal RNA. The chain is Small ribosomal subunit protein bS20 from Caldanaerobacter subterraneus subsp. tengcongensis (strain DSM 15242 / JCM 11007 / NBRC 100824 / MB4) (Thermoanaerobacter tengcongensis).